Consider the following 1233-residue polypeptide: ATP-dependent helicase/nuclease subunit A (1233 aa).

Positions Thr-3 to Arg-474 constitute a UvrD-like helicase ATP-binding domain. Position 24–31 (Ala-24–Thr-31) interacts with ATP. The UvrD-like helicase C-terminal domain maps to Val-518–Gly-809. The segment at Val-533–Glu-555 is disordered.

This sequence belongs to the helicase family. AddA subfamily. In terms of assembly, heterodimer of AddA and AddB/RexB. Requires Mg(2+) as cofactor.

It catalyses the reaction Couples ATP hydrolysis with the unwinding of duplex DNA by translocating in the 3'-5' direction.. The catalysed reaction is ATP + H2O = ADP + phosphate + H(+). Functionally, the heterodimer acts as both an ATP-dependent DNA helicase and an ATP-dependent, dual-direction single-stranded exonuclease. Recognizes the chi site generating a DNA molecule suitable for the initiation of homologous recombination. The AddA nuclease domain is required for chi fragment generation; this subunit has the helicase and 3' -&gt; 5' nuclease activities. In Thermoanaerobacter pseudethanolicus (strain ATCC 33223 / 39E) (Clostridium thermohydrosulfuricum), this protein is ATP-dependent helicase/nuclease subunit A.